A 270-amino-acid polypeptide reads, in one-letter code: MLLASVPQLDRVAIQLGPFPVYWYGIIIGTGVLLGLWLATREGERLGIPKDTFVDLVLIAVPIAILFARMYYVIFEWEYYAQNPSQIINIRQGGLAIHGGLIGAVITGVLFAKRRGVSFWKLADIAAPSILLGQAIGRWGNFMNQEAHGDEVTRQFLEGLHLPDFIINQMYIEGVYYHPTFLYESLWNFAGVILLLALRKVNLRRGELFFTYLIWYSVGRFFVEGLRTDSLMLGPLRIAQVMSIGLVVISIIFIIVRRKMGQADKRYLEN.

Helical transmembrane passes span 19-39 (FPVY…LWLA), 56-76 (LVLI…VIFE), 92-112 (QGGL…VLFA), and 116-136 (GVSF…GQAI). Position 138 (arginine 138) interacts with a 1,2-diacyl-sn-glycero-3-phospho-(1'-sn-glycerol). 3 consecutive transmembrane segments (helical) span residues 178-198 (HPTF…LLAL), 206-226 (GELF…VEGL), and 236-256 (LRIA…FIIV).

The protein belongs to the Lgt family.

The protein localises to the cell membrane. The catalysed reaction is L-cysteinyl-[prolipoprotein] + a 1,2-diacyl-sn-glycero-3-phospho-(1'-sn-glycerol) = an S-1,2-diacyl-sn-glyceryl-L-cysteinyl-[prolipoprotein] + sn-glycerol 1-phosphate + H(+). Its pathway is protein modification; lipoprotein biosynthesis (diacylglyceryl transfer). In terms of biological role, catalyzes the transfer of the diacylglyceryl group from phosphatidylglycerol to the sulfhydryl group of the N-terminal cysteine of a prolipoprotein, the first step in the formation of mature lipoproteins. The sequence is that of Phosphatidylglycerol--prolipoprotein diacylglyceryl transferase from Bacillus cereus (strain B4264).